The sequence spans 277 residues: MLYIIGLGLGDEKDITLRGLEAVKKSQKVYMEAYTSLLSFGLSADGLSNLEKFYGKPIILADREMVEEKAGDMIDEAIDNDVAFLVVGDPFGATTHSDLVVRAKTLGVKVEVVHNASVMNAVGICGLQLYHYGETVSIPFFTETWRPDSFYEKIKKNRSLGLHTLCLLDIRVKEPTFESLCRGGKKQYEPPRYMSVNTAIEQLLEVEQKHGDSVYGEDTQCVGFARLGSEDQTIVAGTMKQLESVDFGAPLHCLVIVGETHPVEEEMLEFYKYKSGN.

S-adenosyl-L-methionine contacts are provided by residues Leu9, Asp89, Gly92, Ser117–Val118, Leu168, Leu227, and His252.

The protein belongs to the diphthine synthase family.

It catalyses the reaction 2-[(3S)-amino-3-carboxypropyl]-L-histidyl-[translation elongation factor 2] + 4 S-adenosyl-L-methionine = diphthine methyl ester-[translation elongation factor 2] + 4 S-adenosyl-L-homocysteine + 3 H(+). It participates in protein modification; peptidyl-diphthamide biosynthesis. Its function is as follows. S-adenosyl-L-methionine-dependent methyltransferase that catalyzes four methylations of the modified target histidine residue in translation elongation factor 2 (EF-2), to form an intermediate called diphthine methyl ester. The four successive methylation reactions represent the second step of diphthamide biosynthesis. This chain is Probable diphthine methyl ester synthase, found in Arabidopsis thaliana (Mouse-ear cress).